Consider the following 63-residue polypeptide: Large ribosomal subunit protein bL32c (63 aa).

The tract at residues 39–63 (SFSSGNEHPKPKGFSGQQTNNKIFE) is disordered. Residues 53–63 (SGQQTNNKIFE) show a composition bias toward polar residues.

This sequence belongs to the bacterial ribosomal protein bL32 family.

The protein resides in the plastid. Its subcellular location is the chloroplast. The sequence is that of Large ribosomal subunit protein bL32c from Triticum aestivum (Wheat).